We begin with the raw amino-acid sequence, 366 residues long: Phospho-2-dehydro-3-deoxyheptonate aldolase (366 aa).

The protein belongs to the class-I DAHP synthase family.

It catalyses the reaction D-erythrose 4-phosphate + phosphoenolpyruvate + H2O = 7-phospho-2-dehydro-3-deoxy-D-arabino-heptonate + phosphate. Its pathway is metabolic intermediate biosynthesis; chorismate biosynthesis; chorismate from D-erythrose 4-phosphate and phosphoenolpyruvate: step 1/7. Stereospecific condensation of phosphoenolpyruvate (PEP) and D-erythrose-4-phosphate (E4P) giving rise to 3-deoxy-D-arabino-heptulosonate-7-phosphate (DAHP). The protein is Phospho-2-dehydro-3-deoxyheptonate aldolase (aroG) of Corynebacterium glutamicum (strain ATCC 13032 / DSM 20300 / JCM 1318 / BCRC 11384 / CCUG 27702 / LMG 3730 / NBRC 12168 / NCIMB 10025 / NRRL B-2784 / 534).